The sequence spans 229 residues: 3,4-dihydroxy-2-butanone 4-phosphate synthase (229 aa).

Residues 28-29 (RE), Asp33, 164-168 (RGGHT), and Glu188 each bind D-ribulose 5-phosphate. A Mg(2+)-binding site is contributed by Glu29. Mg(2+) is bound at residue His167.

The protein belongs to the DHBP synthase family. In terms of assembly, homodimer. The cofactor is Mg(2+). Requires Mn(2+) as cofactor.

The enzyme catalyses D-ribulose 5-phosphate = (2S)-2-hydroxy-3-oxobutyl phosphate + formate + H(+). It participates in cofactor biosynthesis; riboflavin biosynthesis; 2-hydroxy-3-oxobutyl phosphate from D-ribulose 5-phosphate: step 1/1. Catalyzes the conversion of D-ribulose 5-phosphate to formate and 3,4-dihydroxy-2-butanone 4-phosphate. The chain is 3,4-dihydroxy-2-butanone 4-phosphate synthase from Methanothermobacter thermautotrophicus (strain ATCC 29096 / DSM 1053 / JCM 10044 / NBRC 100330 / Delta H) (Methanobacterium thermoautotrophicum).